The following is a 260-amino-acid chain: CD320 antigen (260 aa).

The N-terminal stretch at methionine 1–alanine 28 is a signal peptide. Residues alanine 29 to glycine 208 lie on the Extracellular side of the membrane. One can recognise an LDL-receptor class A 1 domain in the interval serine 46 to arginine 83. Intrachain disulfides connect cysteine 47–cysteine 60, cysteine 54–cysteine 73, and cysteine 67–cysteine 82. Ca(2+)-binding residues include tryptophan 65, aspartate 68, aspartate 70, aspartate 72, aspartate 78, and glutamate 79. Asparagine 118 is a glycosylation site (N-linked (GlcNAc...) asparagine). The region spanning proline 123–aspartate 160 is the LDL-receptor class A 2 domain. Cystine bridges form between cysteine 124–cysteine 137, cysteine 131–cysteine 150, and cysteine 144–cysteine 159. 6 residues coordinate Ca(2+): tryptophan 142, aspartate 145, histidine 147, aspartate 149, aspartate 155, and glutamate 156. Residue asparagine 185 is glycosylated (N-linked (GlcNAc...) asparagine). Residues valine 209 to leucine 229 traverse the membrane as a helical segment. At arginine 230–isoleucine 260 the chain is on the cytoplasmic side.

As to quaternary structure, interacts (via LDL-receptor class A domains) with TCN2.

Its subcellular location is the cell membrane. Its function is as follows. Receptor for transcobalamin saturated with cobalamin (TCbl). Plays an important role in cobalamin uptake. Plasma membrane protein that is expressed on follicular dendritic cells (FDC) and mediates interaction with germinal center B cells. Functions as a costimulator to promote B cell responses to antigenic stimuli; promotes B cell differentiation and proliferation. Germinal center-B (GC-B) cells differentiate into memory B-cells and plasma cells (PC) through interaction with T-cells and follicular dendritic cells (FDC). CD320 augments the proliferation of PC precursors generated by IL-10. This is CD320 antigen (Cd320) from Mus musculus (Mouse).